Reading from the N-terminus, the 328-residue chain is P2Y purinoceptor 6 (328 aa).

Over 1–27 the chain is Extracellular; sequence MERDNGTIQAPGLPPTTCVYREDFKRL. N-linked (GlcNAc...) asparagine glycosylation occurs at Asn-5. The helical transmembrane segment at 28–48 threads the bilayer; the sequence is LLPPVYSVVLVVGLPLNVCVI. Residues 49–62 lie on the Cytoplasmic side of the membrane; sequence AQICASRRTLTRSA. The chain crosses the membrane as a helical span at residues 63-83; it reads VYTLNLALADLLYACSLPLLI. Topologically, residues 84–101 are extracellular; the sequence is YNYARGDHWPFGDLACRL. A disulfide bond links Cys-99 and Cys-177. A helical transmembrane segment spans residues 102 to 122; the sequence is VRFLFYANLHGSILFLTCISF. Topologically, residues 123–144 are cytoplasmic; sequence QRYLGICHPLAPWHKRGGRRAA. A helical membrane pass occupies residues 145–165; the sequence is WVVCGVVWLVVTAQCLPTAVF. The Extracellular portion of the chain corresponds to 166-194; it reads AATGIQRNRTVCYDLSPPILSTRYLPYGM. Asn-173 is a glycosylation site (N-linked (GlcNAc...) asparagine). Residues 195–215 form a helical membrane-spanning segment; the sequence is ALTVIGFLLPFTALLACYCRM. The Cytoplasmic segment spans residues 216–236; that stretch reads ARRLCRQDGPAGPVAQERRSK. A helical transmembrane segment spans residues 237-257; it reads AARMAVVVAAVFVISFLPFHI. At 258 to 280 the chain is on the extracellular side; it reads TKTAYLAVRSTPGVSCPVLETFA. Residues 281-303 traverse the membrane as a helical segment; the sequence is AAYKGTRPFASANSVLDPILFYF. Residues 304–328 lie on the Cytoplasmic side of the membrane; sequence TQQKFRRQPHDLLQKLTAKWQRQRV.

Belongs to the G-protein coupled receptor 1 family. Abundantly expressed in various tissues including lung, stomach, intestine, spleen, mesentery, heart, and, most prominently, aorta.

The protein resides in the cell membrane. Functionally, receptor for extracellular UTP &gt; ADP = 2-methylthio-ATP &gt; ADP-beta-S &gt; ATP = ATP-gamma-S. The activity of this receptor is mediated by G proteins which activate a phosphatidylinositol-calcium second messenger system. Functionally coupled to phospholipase C. The sequence is that of P2Y purinoceptor 6 (P2ry6) from Rattus norvegicus (Rat).